A 426-amino-acid polypeptide reads, in one-letter code: Histidine--tRNA ligase (426 aa).

The protein belongs to the class-II aminoacyl-tRNA synthetase family.

The protein localises to the cytoplasm. It catalyses the reaction tRNA(His) + L-histidine + ATP = L-histidyl-tRNA(His) + AMP + diphosphate + H(+). This chain is Histidine--tRNA ligase, found in Saccharolobus islandicus (strain L.S.2.15 / Lassen #1) (Sulfolobus islandicus).